Reading from the N-terminus, the 595-residue chain is Sorting nexin-9 (595 aa).

The SH3 domain maps to 1 to 62; that stretch reads MATKARVMYD…PTDYVEILPS (62 aa). Residues 91 to 201 form a disordered region; the sequence is SSSAASNNHQ…GNSRASSSSM (111 aa). 2 stretches are compositionally biased toward polar residues: residues 111–121 and 135–145; these read WSASKSGNWES and QRNTNTPNNWD. 2 positions are modified to phosphoserine: Ser-116 and Ser-121. A compositionally biased stretch (acidic residues) spans 160 to 169; it reads GDDDDWDEDW. The segment covering 191–201 has biased composition (polar residues); sequence RGNSRASSSSM. Phosphoserine occurs at positions 197 and 200. Positions 201-213 are critical for tubulation activity; it reads MKIPLNKFPGFAK. Phosphothreonine is present on Thr-216. Tyr-239 carries the phosphotyrosine modification. The region spanning 250 to 361 is the PX domain; that stretch reads FDCVVADPRK…QFLNFRDEKE (112 aa). Positions 286, 288, and 327 each coordinate a 1,2-diacyl-sn-glycero-3-phospho-(1D-myo-inositol-4,5-bisphosphate). Position 288 is an N6-acetyllysine (Lys-288). The region spanning 392–595 is the BAR domain; that stretch reads LVEIEQKCEA…RQALSRFPVM (204 aa).

Belongs to the sorting nexin family. As to quaternary structure, homodimer, and homooligomer. Heterodimer with SNX18. Interacts with ITCH. Interacts (via SH3 domain) with TNK2, WASL and ACTR3. Identified in a complex with TNK2 and clathrin heavy chains. Identified in a complex with the AP-2 complex, clathrin and DNM2. Interacts (via SH3 domain) with DNM1 and DNM2. Identified in an oligomeric complex containing DNM1 and SNX9. Interacts with FCHSD1. Interacts with ADAM9 and ADAM15 cytoplasmic tails. In terms of processing, ubiquitinated by ITCH. Phosphorylated on tyrosine residues by TNK2. Phosphorylation promotes its activity in the degradation of EGFR. In terms of tissue distribution, widely expressed, with highest levels in heart and placenta, and lowest levels in thymus and peripheral blood leukocytes.

It localises to the cytoplasmic vesicle membrane. The protein localises to the cell membrane. The protein resides in the cytoplasmic vesicle. It is found in the clathrin-coated vesicle. Its subcellular location is the golgi apparatus. It localises to the trans-Golgi network. The protein localises to the cell projection. The protein resides in the ruffle. It is found in the cytoplasm. Involved in endocytosis and intracellular vesicle trafficking, both during interphase and at the end of mitosis. Required for efficient progress through mitosis and cytokinesis. Required for normal formation of the cleavage furrow at the end of mitosis. Plays a role in endocytosis via clathrin-coated pits, but also clathrin-independent, actin-dependent fluid-phase endocytosis. Plays a role in macropinocytosis. Promotes internalization of TNFR. Promotes degradation of EGFR after EGF signaling. Stimulates the GTPase activity of DNM1. Promotes DNM1 oligomerization. Promotes activation of the Arp2/3 complex by WASL, and thereby plays a role in the reorganization of the F-actin cytoskeleton. Binds to membranes enriched in phosphatidylinositol 4,5-bisphosphate and promotes membrane tubulation. Has lower affinity for membranes enriched in phosphatidylinositol 3-phosphate. This chain is Sorting nexin-9 (SNX9), found in Homo sapiens (Human).